The primary structure comprises 423 residues: Serine--tRNA ligase (423 aa).

An L-serine-binding site is contributed by 231 to 233 (TAE). 262-264 (RSE) contacts ATP. Residue Glu285 participates in L-serine binding. 349–352 (EIGS) contributes to the ATP binding site. Ser385 is a binding site for L-serine.

Belongs to the class-II aminoacyl-tRNA synthetase family. Type-1 seryl-tRNA synthetase subfamily. Homodimer. The tRNA molecule binds across the dimer.

It localises to the cytoplasm. The catalysed reaction is tRNA(Ser) + L-serine + ATP = L-seryl-tRNA(Ser) + AMP + diphosphate + H(+). It catalyses the reaction tRNA(Sec) + L-serine + ATP = L-seryl-tRNA(Sec) + AMP + diphosphate + H(+). The protein operates within aminoacyl-tRNA biosynthesis; selenocysteinyl-tRNA(Sec) biosynthesis; L-seryl-tRNA(Sec) from L-serine and tRNA(Sec): step 1/1. Functionally, catalyzes the attachment of serine to tRNA(Ser). Is also able to aminoacylate tRNA(Sec) with serine, to form the misacylated tRNA L-seryl-tRNA(Sec), which will be further converted into selenocysteinyl-tRNA(Sec). This chain is Serine--tRNA ligase, found in Acholeplasma laidlawii (strain PG-8A).